A 276-amino-acid polypeptide reads, in one-letter code: Putative pyruvate, phosphate dikinase regulatory protein (276 aa).

Residue 152 to 159 coordinates ADP; sequence GISRTSKT.

The protein belongs to the pyruvate, phosphate/water dikinase regulatory protein family. PDRP subfamily.

It catalyses the reaction N(tele)-phospho-L-histidyl/L-threonyl-[pyruvate, phosphate dikinase] + ADP = N(tele)-phospho-L-histidyl/O-phospho-L-threonyl-[pyruvate, phosphate dikinase] + AMP + H(+). It carries out the reaction N(tele)-phospho-L-histidyl/O-phospho-L-threonyl-[pyruvate, phosphate dikinase] + phosphate + H(+) = N(tele)-phospho-L-histidyl/L-threonyl-[pyruvate, phosphate dikinase] + diphosphate. In terms of biological role, bifunctional serine/threonine kinase and phosphorylase involved in the regulation of the pyruvate, phosphate dikinase (PPDK) by catalyzing its phosphorylation/dephosphorylation. This chain is Putative pyruvate, phosphate dikinase regulatory protein, found in Staphylococcus carnosus (strain TM300).